The primary structure comprises 952 residues: Bifunctional ent-kaurene synthase (952 aa).

Residues 328–331 (DVDD) carry the DXDD B-type cyclization motif motif. Positions 668, 672, 848, 849, 852, and 856 each coordinate Mg(2+). The DEXXE A-type cyclization motif signature appears at 668–672 (DEYME).

This sequence belongs to the terpene synthase family. Mg(2+) serves as cofactor.

It catalyses the reaction ent-copalyl diphosphate = ent-kaur-16-ene + diphosphate. The catalysed reaction is (2E,6E,10E)-geranylgeranyl diphosphate = ent-copalyl diphosphate. The protein operates within plant hormone biosynthesis; gibberellin biosynthesis. Its function is as follows. Bifunctional ent-kaurene synthase; part of the gene cluster that mediates the biosynthesis of gibberellins (GAs), diterpenoids that may provide a selective advantage during infection of the preferred host plant, rice. Gibberellins (GAs) are diterpenoids and are synthesized via the mevalonate pathway. Biosynthesis of the major metabolite GA3 (gibberellic acid) from geranylgeranyl diphosphate (GGPP) requires 13 steps. The GGPP produced by the geranylgeranyl diphosphate synthase GGS2 is converted to ent-kaurene via ent-copalyldiphosphate in a two-step cyclization reaction performed by the bifunctional ent-copalyl diphosphate synthase/ent-kaurene synthase enzyme (CPS/KS). Ent-Kaurene is metabolized to GAs by a series of oxidation reactions catalyzed by cytochrome P450 monooxygenases. Cytochrome P450 monooxygenase P450-4 is an ent-kaurene oxidase that catalyzes the three oxidation steps between ent-kaurene and ent-kaurenoic acid. The highly multifunctional cytochrome P450 monooxygenase P450-1 then catalyzes four steps involving oxidation at two carbon atoms, in the main pathway from ent-kaurenoic acid to GA14 via GA12-aldehyde as well as producing kaurenolides and fujenoic acids as by-products. The cytochrome P450 monooxygenase P450-2 then converts GA14 to GA4 by removal of C-20. GA4 is further converted to GA7 by the GA4 desaturase DES via 1,2-desaturation before cytochrome P450 monooxygenase P450-3, a 13-hydroxylase, hydroxylates GA7 to GA3, the final product of the GA-biosynthetic pathway. The polypeptide is Bifunctional ent-kaurene synthase (Gibberella fujikuroi (strain CBS 195.34 / IMI 58289 / NRRL A-6831) (Bakanae and foot rot disease fungus)).